A 712-amino-acid polypeptide reads, in one-letter code: Patatin-like phospholipase domain-containing protein ACLA_029670 (712 aa).

Positions 1-10 are enriched in polar residues; sequence MTSAEKSATR. Residues 1–20 form a disordered region; the sequence is MTSAEKSATRNIYDPSALPD. The chain crosses the membrane as a helical span at residues 85-105; the sequence is WPFLFIVFAWITVLGIAYALT. In terms of domain architecture, PNPLA spans 275-466; sequence LCLSGGATFA…RTDIPIKALN (192 aa). Positions 306 to 310 match the GXSXG motif; that stretch reads GTSGG. S308 functions as the Nucleophile in the catalytic mechanism. Residue D453 is the Proton acceptor of the active site. Residues 649–664 show a composition bias toward basic and acidic residues; the sequence is FPERHSDYKDESHYTE. Positions 649–686 are disordered; that stretch reads FPERHSDYKDESHYTEVSDSLSTNSSRPHTPDARRGSI. Residues 665–676 are compositionally biased toward polar residues; sequence VSDSLSTNSSRP. Residues 677–686 show a composition bias toward basic and acidic residues; it reads HTPDARRGSI.

Belongs to the PLPL family.

The protein resides in the membrane. Probable lipid hydrolase. The sequence is that of Patatin-like phospholipase domain-containing protein ACLA_029670 from Aspergillus clavatus (strain ATCC 1007 / CBS 513.65 / DSM 816 / NCTC 3887 / NRRL 1 / QM 1276 / 107).